Here is a 127-residue protein sequence, read N- to C-terminus: Protein ApaG (127 aa).

The 125-residue stretch at 3-127 folds into the ApaG domain; sequence DQPPTEIQIS…FRLAAATVFH (125 aa).

This chain is Protein ApaG, found in Acidithiobacillus ferrooxidans (strain ATCC 23270 / DSM 14882 / CIP 104768 / NCIMB 8455) (Ferrobacillus ferrooxidans (strain ATCC 23270)).